A 277-amino-acid chain; its full sequence is Mannosyl-3-phosphoglycerate phosphatase (277 aa).

Catalysis depends on Asp-13, which acts as the Nucleophile. Residues Asp-13, Asp-15, and Asp-219 each coordinate Mg(2+).

It belongs to the HAD-like hydrolase superfamily. MPGP family. It depends on Mg(2+) as a cofactor.

Its subcellular location is the cytoplasm. The catalysed reaction is 2-O-(alpha-D-mannosyl)-3-phosphoglycerate + H2O = (2R)-2-O-(alpha-D-mannosyl)-glycerate + phosphate. It participates in carbohydrate biosynthesis; 2-(alpha-D-mannosyl)-D-glycerate biosynthesis; 2-(alpha-D-mannosyl)-D-glycerate from GDP-alpha-D-mannose (MPG route): step 2/2. Functionally, hydrolyzes mannosyl-3-phosphoglycerate (MPG) to form the osmolyte mannosylglycerate (MG). The protein is Mannosyl-3-phosphoglycerate phosphatase of Aeropyrum pernix (strain ATCC 700893 / DSM 11879 / JCM 9820 / NBRC 100138 / K1).